The following is a 244-amino-acid chain: Small ribosomal subunit protein uS3 (244 aa).

In terms of domain architecture, KH type-2 spans 39 to 107 (IRELIKKESF…KLIINVEEIK (69 aa)). The tract at residues 216 to 244 (LPVYKNKKNDKNKKRRNNNRKGKSQAAKN) is disordered. The segment covering 220–238 (KNKKNDKNKKRRNNNRKGK) has biased composition (basic residues).

Belongs to the universal ribosomal protein uS3 family. As to quaternary structure, part of the 30S ribosomal subunit. Forms a tight complex with proteins S10 and S14.

Its function is as follows. Binds the lower part of the 30S subunit head. Binds mRNA in the 70S ribosome, positioning it for translation. The protein is Small ribosomal subunit protein uS3 of Finegoldia magna (strain ATCC 29328 / DSM 20472 / WAL 2508) (Peptostreptococcus magnus).